Consider the following 214-residue polypeptide: External core antigen (214 aa).

Positions 1 to 19 (MQLFHLCLIISCTCPTLQA) are cleaved as a signal peptide. An HBEAG region spans residues 25-27 (GWL). Positions 164 to 214 (PNAPILSTLPETTVVRRRDRGRSPRRRTPSPRRRRSQSPRRRRSQSRESQC) are disordered. Residues 178 to 207 (VRRRDRGRSPRRRTPSPRRRRSQSPRRRRS) show a composition bias toward basic residues. One copy of the 1; half-length repeat lies at 186-192 (SPRRRTP). Residues 186–208 (SPRRRTPSPRRRRSQSPRRRRSQ) form a 3 X 8 AA repeats of S-P-R-R-R-R-S-Q region. A propeptide spanning residues 186–214 (SPRRRTPSPRRRRSQSPRRRRSQSRESQC) is cleaved from the precursor. 2 tandem repeats follow at residues 193–200 (SPRRRRSQ) and 201–208 (SPRRRRSQ).

Belongs to the orthohepadnavirus precore antigen family. Homodimerizes. In terms of processing, phosphorylated. Cleaved by host furin.

The protein resides in the secreted. It is found in the host nucleus. Its function is as follows. May regulate immune response to the intracellular capsid in acting as a T-cell tolerogen, by having an immunoregulatory effect which prevents destruction of infected cells by cytotoxic T-cells. This immune regulation may predispose to chronicity during perinatal infections and prevent severe liver injury during adult infections. The sequence is that of External core antigen from Homo sapiens (Human).